Reading from the N-terminus, the 273-residue chain is Putative B3 domain-containing protein At5g58280 (273 aa).

Positions Phe127–Asn218 form a DNA-binding region, TF-B3. Positions Ser225–Ala273 are disordered. Acidic residues predominate over residues Ser236–Asp252. Residues Arg258 to Ala273 show a composition bias toward basic residues.

It is found in the nucleus. The sequence is that of Putative B3 domain-containing protein At5g58280 from Arabidopsis thaliana (Mouse-ear cress).